We begin with the raw amino-acid sequence, 99 residues long: Protein RnfH (99 aa).

This sequence belongs to the UPF0125 (RnfH) family.

The polypeptide is Protein RnfH (Buchnera aphidicola subsp. Acyrthosiphon pisum (strain 5A)).